Reading from the N-terminus, the 857-residue chain is Protein translocase subunit SecA (857 aa).

ATP contacts are provided by residues Gln-88, 106–110, and Asp-496; that span reads GEGKT. Residues Cys-833, Cys-835, Cys-844, and Cys-845 each contribute to the Zn(2+) site.

The protein belongs to the SecA family. As to quaternary structure, monomer and homodimer. Part of the essential Sec protein translocation apparatus which comprises SecA, SecYEG and auxiliary proteins SecDF-YajC and YidC. It depends on Zn(2+) as a cofactor.

Its subcellular location is the cell inner membrane. The protein resides in the cytoplasm. It carries out the reaction ATP + H2O + cellular proteinSide 1 = ADP + phosphate + cellular proteinSide 2.. Its function is as follows. Part of the Sec protein translocase complex. Interacts with the SecYEG preprotein conducting channel. Has a central role in coupling the hydrolysis of ATP to the transfer of proteins into and across the cell membrane, serving as an ATP-driven molecular motor driving the stepwise translocation of polypeptide chains across the membrane. The polypeptide is Protein translocase subunit SecA (Sulfurimonas denitrificans (strain ATCC 33889 / DSM 1251) (Thiomicrospira denitrificans (strain ATCC 33889 / DSM 1251))).